An 827-amino-acid chain; its full sequence is Glycerol-3-phosphate acyltransferase (827 aa).

The short motif at 325 to 330 is the HXXXXD motif element; the sequence is CHRSHM.

This sequence belongs to the GPAT/DAPAT family.

The protein resides in the cell inner membrane. It catalyses the reaction sn-glycerol 3-phosphate + an acyl-CoA = a 1-acyl-sn-glycero-3-phosphate + CoA. Its pathway is phospholipid metabolism; CDP-diacylglycerol biosynthesis; CDP-diacylglycerol from sn-glycerol 3-phosphate: step 1/3. The protein is Glycerol-3-phosphate acyltransferase of Shigella flexneri serotype 5b (strain 8401).